We begin with the raw amino-acid sequence, 231 residues long: Ribonuclease P protein component 3 (231 aa).

This sequence belongs to the eukaryotic/archaeal RNase P protein component 3 family. Consists of a catalytic RNA component and at least 4-5 protein subunits.

It is found in the cytoplasm. The catalysed reaction is Endonucleolytic cleavage of RNA, removing 5'-extranucleotides from tRNA precursor.. Its function is as follows. Part of ribonuclease P, a protein complex that generates mature tRNA molecules by cleaving their 5'-ends. In Methanococcus vannielii (strain ATCC 35089 / DSM 1224 / JCM 13029 / OCM 148 / SB), this protein is Ribonuclease P protein component 3.